The sequence spans 410 residues: Putative ribonuclease E (410 aa).

Residues 39–119 (SNIYKGKIVR…GTKGALLTTF (81 aa)) form the S1 motif domain. Residues aspartate 303 and aspartate 346 each coordinate Mg(2+).

This sequence belongs to the RNase E/G family. RNase E subfamily. In terms of assembly, component of the RNA degradosome, which is a multiprotein complex involved in RNA processing and mRNA degradation. Within the RNA degradosome, RNase E assembles into a homotetramer formed by a dimer of dimers. Mg(2+) serves as cofactor.

The protein resides in the cytoplasm. It is found in the cell inner membrane. The enzyme catalyses Endonucleolytic cleavage of single-stranded RNA in A- and U-rich regions.. Its function is as follows. Endoribonuclease that plays a central role in RNA processing and decay. Required for the maturation of 5S and 16S rRNAs and the majority of tRNAs. Also involved in the degradation of most mRNAs. This Buchnera aphidicola subsp. Baizongia pistaciae (strain Bp) protein is Putative ribonuclease E (rne).